A 118-amino-acid polypeptide reads, in one-letter code: Large ribosomal subunit protein bL20 (118 aa).

The protein belongs to the bacterial ribosomal protein bL20 family.

Its function is as follows. Binds directly to 23S ribosomal RNA and is necessary for the in vitro assembly process of the 50S ribosomal subunit. It is not involved in the protein synthesizing functions of that subunit. This Pseudomonas aeruginosa (strain LESB58) protein is Large ribosomal subunit protein bL20.